Reading from the N-terminus, the 93-residue chain is Small ribosomal subunit protein bS20 (93 aa).

Belongs to the bacterial ribosomal protein bS20 family.

Functionally, binds directly to 16S ribosomal RNA. The protein is Small ribosomal subunit protein bS20 of Hydrogenobaculum sp. (strain Y04AAS1).